We begin with the raw amino-acid sequence, 422 residues long: 5'-deoxyadenosine deaminase (422 aa).

Zn(2+)-binding residues include histidine 57 and histidine 59. Substrate-binding residues include glutamate 86 and histidine 178. Zn(2+) is bound at residue histidine 205. Residues glutamate 208 and aspartate 294 each contribute to the substrate site. A Zn(2+)-binding site is contributed by aspartate 294.

Belongs to the metallo-dependent hydrolases superfamily. MTA/SAH deaminase family. In terms of assembly, homotetramer. It depends on Zn(2+) as a cofactor.

It catalyses the reaction 5'-deoxyadenosine + H2O + H(+) = 5'-deoxyinosine + NH4(+). The catalysed reaction is S-adenosyl-L-homocysteine + H2O + H(+) = S-inosyl-L-homocysteine + NH4(+). The enzyme catalyses S-methyl-5'-thioadenosine + H2O + H(+) = S-methyl-5'-thioinosine + NH4(+). It carries out the reaction adenosine + H2O + H(+) = inosine + NH4(+). It functions in the pathway amino-acid biosynthesis; S-adenosyl-L-methionine biosynthesis. Its function is as follows. Catalyzes the deamination of three SAM-derived enzymatic products, namely 5'-deoxyadenosine, S-adenosyl-L-homocysteine, and 5'-methylthioadenosine, to produce the inosine analogs. Can also deaminate adenosine. The preferred substrate for this enzyme is 5'-deoxyadenosine, but all these substrates are efficiently deaminated. Likely functions in a S-adenosyl-L-methionine (SAM) recycling pathway from S-adenosyl-L-homocysteine (SAH) produced from SAM-dependent methylation reactions. May also be involved in the recycling of 5'-deoxyadenosine, whereupon the 5'-deoxyribose moiety of 5'-deoxyinosine is further metabolized to deoxyhexoses used for the biosynthesis of aromatic amino acids in methanogens. The protein is 5'-deoxyadenosine deaminase of Methanococcus maripaludis (strain C7 / ATCC BAA-1331).